We begin with the raw amino-acid sequence, 386 residues long: O-phospho-L-seryl-tRNA:Cys-tRNA synthase (386 aa).

Pyridoxal 5'-phosphate-binding positions include 89–90 (AR), N196, and 219–221 (SGH). K222 carries the N6-(pyridoxal phosphate)lysine modification.

It belongs to the SepCysS family. Homodimer. Interacts with SepRS. Pyridoxal 5'-phosphate is required as a cofactor.

The enzyme catalyses O-phospho-L-seryl-tRNA(Cys) + hydrogen sulfide + H(+) = L-cysteinyl-tRNA(Cys) + phosphate. Converts O-phospho-L-seryl-tRNA(Cys) (Sep-tRNA(Cys)) to L-cysteinyl-tRNA(Cys) (Cys-tRNA(Cys)). The polypeptide is O-phospho-L-seryl-tRNA:Cys-tRNA synthase (Methanosarcina acetivorans (strain ATCC 35395 / DSM 2834 / JCM 12185 / C2A)).